The following is an 83-amino-acid chain: Mitochondrial import inner membrane translocase subunit Tim8 (83 aa).

A Twin CX3C motif motif is present at residues 35–60 (CWDVCFADYRPPSKMDGKTQTCIQNC). 2 cysteine pairs are disulfide-bonded: Cys-35/Cys-60 and Cys-39/Cys-56.

Belongs to the small Tim family. Heterohexamer; composed of 3 copies of ddp-1/tim-8 and 3 copies of tin-13/tim-13, named soluble 70 kDa complex. Associates with the TIM22 complex, whose core is composed of tim-22.

Its subcellular location is the mitochondrion inner membrane. Its function is as follows. Mitochondrial intermembrane chaperone that participates in the import and insertion of some multi-pass transmembrane proteins into the mitochondrial inner membrane. Also required for the transfer of beta-barrel precursors from the TOM complex to the sorting and assembly machinery (SAM complex) of the outer membrane. Acts as a chaperone-like protein that protects the hydrophobic precursors from aggregation and guide them through the mitochondrial intermembrane space. The ddp-1/tim-8-tim-13 complex mediates the import of some proteins while the predominant tim-9/tin-9.1-tim-10/tin-10 70 kDa complex mediates the import of much more proteins. The sequence is that of Mitochondrial import inner membrane translocase subunit Tim8 from Caenorhabditis elegans.